The chain runs to 550 residues: Hydroxylamine reductase (550 aa).

Positions 5, 8, 17, and 23 each coordinate [4Fe-4S] cluster. The hybrid [4Fe-2O-2S] cluster site is built by histidine 250, glutamate 274, cysteine 319, cysteine 405, cysteine 433, cysteine 458, glutamate 492, and lysine 494. Cysteine persulfide is present on cysteine 405.

Belongs to the HCP family. [4Fe-4S] cluster serves as cofactor. Requires hybrid [4Fe-2O-2S] cluster as cofactor.

Its subcellular location is the cytoplasm. It carries out the reaction A + NH4(+) + H2O = hydroxylamine + AH2 + H(+). Its function is as follows. Catalyzes the reduction of hydroxylamine to form NH(3) and H(2)O. The sequence is that of Hydroxylamine reductase from Geobacter sulfurreducens (strain ATCC 51573 / DSM 12127 / PCA).